Reading from the N-terminus, the 1679-residue chain is AF4/FMR2 family member lilli (1679 aa).

Disordered stretches follow at residues 1 to 21, 55 to 78, 124 to 305, 406 to 539, 580 to 609, 733 to 755, 783 to 1172, and 1197 to 1319; these read MAQQ…SSIN, NYNM…QQGI, RSAP…EKDV, LHQL…GAQN, MGAG…SNKW, DSGT…AVGG, QPTQ…TTPH, and TPAQ…LQIG. Basic and acidic residues predominate over residues 69–78; sequence REKIERQQGI. 2 stretches are compositionally biased toward low complexity: residues 144-181 and 212-244; these read SLGH…QQQQ and PSSS…SSGG. A Phosphothreonine modification is found at T421. Residues 429–442 show a composition bias toward basic and acidic residues; sequence LKTEKNHSLEKQDS. The span at 444–455 shows a compositional bias: acidic residues; that stretch reads LENDLELSESED. S451 and S453 each carry phosphoserine. The span at 464 to 484 shows a compositional bias: low complexity; that stretch reads SAGNSSNSSESDSSESGSESS. Positions 492-501 are enriched in basic residues; the sequence is HPNHQQHHHQ. Positions 502–532 are enriched in low complexity; sequence LQQQQQQQQQQASMQQQQVLQQQQQHRPQPL. Over residues 582-591 the composition is skewed to gly residues; sequence AGSGSGGTLS. Over residues 598–609 the composition is skewed to polar residues; that stretch reads NKTPSPTESNKW. Low complexity predominate over residues 733-752; it reads DSGTSASGSSSSSSSSSDSA. The segment covering 783 to 796 has biased composition (polar residues); sequence QPTQSQKAPPSNSV. The span at 810–820 shows a compositional bias: basic residues; the sequence is QRQKKPRKKKA. Phosphoserine occurs at positions 829 and 830. The segment at residues 859–871 is a DNA-binding region (a.T hook); the sequence is KKGRGRPRKQQQS. A compositionally biased stretch (low complexity) spans 868–906; it reads QQQSGGSGNLSSASAGSSSQTKGPTLTAAKKPLAKTPLA. Phosphoserine is present on residues S879 and S881. The span at 917–927 shows a compositional bias: polar residues; the sequence is SQSSSNGNTPT. 2 stretches are compositionally biased toward low complexity: residues 957–973 and 1001–1012; these read SSSA…SSSS and GSGSSSPSSSGS. Residues 1019 to 1030 are compositionally biased toward polar residues; that stretch reads TRSQVGSGQALA. Positions 1042-1068 are enriched in low complexity; that stretch reads SQHSQHLSSSECSSSSGGCTAVCSSSS. The segment covering 1073 to 1090 has biased composition (basic and acidic residues); it reads EGRREKERERKPKSDKNK. Positions 1130 to 1140 are enriched in pro residues; the sequence is QPPPPQAPPAA. Residues 1198 to 1213 are compositionally biased toward polar residues; that stretch reads PAQQNGHLTPKDQATN. Basic and acidic residues-rich tracts occupy residues 1234–1251 and 1260–1288; these read EHPV…EAKF and FQLK…EQPP. The residue at position 1368 (S1368) is a Phosphoserine. T1370 carries the phosphothreonine modification. Residues 1569-1589 show a composition bias toward low complexity; it reads GNTPSSISPSNSVGSQGSGSN. Residues 1569-1594 are disordered; it reads GNTPSSISPSNSVGSQGSGSNTPPGR.

Belongs to the AF4 family.

It is found in the nucleus. Its function is as follows. Has a role in transcriptional regulation. Acts in parallel with the Ras/MAPK and the PI3K/PKB pathways in the control of cell identity and cellular growth. Essential for regulation of the cytoskeleton and cell growth but not for cell proliferation or growth rate. Required specifically for the microtubule-based basal transport of lipid droplets. Plays a partially redundant function downstream of Raf in cell fate specification in the developing eye. Pair-rule protein that regulates embryonic cellularization, gastrulation and segmentation. The sequence is that of AF4/FMR2 family member lilli from Drosophila erecta (Fruit fly).